An 86-amino-acid chain; its full sequence is Defensin-like protein 259 (86 aa).

A signal peptide spans 1–25 (MKNASLKLPLLIFILVITSNLGAEA). Cystine bridges form between Cys60–Cys76, Cys66–Cys83, and Cys70–Cys85.

It belongs to the DEFL family.

It localises to the secreted. The chain is Defensin-like protein 259 from Arabidopsis thaliana (Mouse-ear cress).